The sequence spans 202 residues: Guanylate kinase (202 aa).

The region spanning 3-181 is the Guanylate kinase-like domain; it reads GNLFVVAAPS…ALDDLRAVVR (179 aa). 10-17 is an ATP binding site; that stretch reads APSGAGKT.

It belongs to the guanylate kinase family.

The protein resides in the cytoplasm. The enzyme catalyses GMP + ATP = GDP + ADP. Functionally, essential for recycling GMP and indirectly, cGMP. In Dechloromonas aromatica (strain RCB), this protein is Guanylate kinase.